The primary structure comprises 283 residues: Putative 4-diphosphocytidyl-2-C-methyl-D-erythritol kinase (283 aa).

The active site involves lysine 11. 95-105 (PVCAGMGGGSS) contacts ATP. Residue aspartate 137 is part of the active site.

It belongs to the GHMP kinase family. IspE subfamily.

The enzyme catalyses 4-CDP-2-C-methyl-D-erythritol + ATP = 4-CDP-2-C-methyl-D-erythritol 2-phosphate + ADP + H(+). Functionally, catalyzes the phosphorylation of the position 2 hydroxy group of 4-diphosphocytidyl-2C-methyl-D-erythritol. The chain is Putative 4-diphosphocytidyl-2-C-methyl-D-erythritol kinase from Streptococcus equi subsp. equi (strain 4047).